A 199-amino-acid chain; its full sequence is NAD(P)H dehydrogenase (quinone) (199 aa).

One can recognise a Flavodoxin-like domain in the interval 4–190 (ILVLYYSTYG…DGARFQGRHV (187 aa)). Residues 10-15 (STYGHI) and 78-80 (TRF) contribute to the FMN site. Y12 serves as a coordination point for NAD(+). W98 provides a ligand contact to substrate. Residues 113–119 (STATQHG) and H134 each bind FMN.

It belongs to the WrbA family. The cofactor is FMN.

The catalysed reaction is a quinone + NADH + H(+) = a quinol + NAD(+). The enzyme catalyses a quinone + NADPH + H(+) = a quinol + NADP(+). In Rhizorhabdus wittichii (strain DSM 6014 / CCUG 31198 / JCM 15750 / NBRC 105917 / EY 4224 / RW1) (Sphingomonas wittichii), this protein is NAD(P)H dehydrogenase (quinone).